A 346-amino-acid chain; its full sequence is tRNA N6-adenosine threonylcarbamoyltransferase (346 aa).

Fe cation is bound by residues histidine 111 and histidine 115. Residues leucine 134–glycine 138, aspartate 167, glycine 180, and asparagine 279 contribute to the substrate site. Residue aspartate 307 coordinates Fe cation.

The protein belongs to the KAE1 / TsaD family. Requires Fe(2+) as cofactor.

The protein resides in the cytoplasm. The enzyme catalyses L-threonylcarbamoyladenylate + adenosine(37) in tRNA = N(6)-L-threonylcarbamoyladenosine(37) in tRNA + AMP + H(+). In terms of biological role, required for the formation of a threonylcarbamoyl group on adenosine at position 37 (t(6)A37) in tRNAs that read codons beginning with adenine. Is involved in the transfer of the threonylcarbamoyl moiety of threonylcarbamoyl-AMP (TC-AMP) to the N6 group of A37, together with TsaE and TsaB. TsaD likely plays a direct catalytic role in this reaction. The sequence is that of tRNA N6-adenosine threonylcarbamoyltransferase from Burkholderia pseudomallei (strain K96243).